The primary structure comprises 157 residues: Small ribosomal subunit protein uS7 (157 aa).

The protein belongs to the universal ribosomal protein uS7 family. In terms of assembly, part of the 30S ribosomal subunit. Contacts proteins S9 and S11.

One of the primary rRNA binding proteins, it binds directly to 16S rRNA where it nucleates assembly of the head domain of the 30S subunit. Is located at the subunit interface close to the decoding center, probably blocks exit of the E-site tRNA. The protein is Small ribosomal subunit protein uS7 of Stenotrophomonas maltophilia (strain R551-3).